The primary structure comprises 200 residues: Adenylate kinase (200 aa).

Position 10 to 15 (10 to 15) interacts with ATP; the sequence is GAGKGT. Positions 30 to 59 are NMP; it reads STGDMLRAAVAAGTPVGLEAKAVMESGGLV. AMP is bound by residues Thr31, Arg36, 57–59, 85–88, and Gln92; these read GLV and GFPR. The interval 126-142 is LID; sequence KRAAETLARGQAVRKDD. Arg127 lines the ATP pocket. AMP is bound by residues Arg139 and Arg150. Gln178 is an ATP binding site.

It belongs to the adenylate kinase family. Monomer.

The protein resides in the cytoplasm. It catalyses the reaction AMP + ATP = 2 ADP. It participates in purine metabolism; AMP biosynthesis via salvage pathway; AMP from ADP: step 1/1. Functionally, catalyzes the reversible transfer of the terminal phosphate group between ATP and AMP. Plays an important role in cellular energy homeostasis and in adenine nucleotide metabolism. In Methylobacterium radiotolerans (strain ATCC 27329 / DSM 1819 / JCM 2831 / NBRC 15690 / NCIMB 10815 / 0-1), this protein is Adenylate kinase.